A 483-amino-acid chain; its full sequence is Xylulose kinase (483 aa).

77–78 (MH) contributes to the substrate binding site. D233 serves as the catalytic Proton acceptor.

The protein belongs to the FGGY kinase family.

It catalyses the reaction D-xylulose + ATP = D-xylulose 5-phosphate + ADP + H(+). Its function is as follows. Catalyzes the phosphorylation of D-xylulose to D-xylulose 5-phosphate. This is Xylulose kinase from Klebsiella pneumoniae.